The chain runs to 591 residues: V-type ATP synthase alpha chain (591 aa).

Residue 242–249 coordinates ATP; it reads GPFGAGKT.

It belongs to the ATPase alpha/beta chains family.

The catalysed reaction is ATP + H2O + 4 H(+)(in) = ADP + phosphate + 5 H(+)(out). Its function is as follows. Produces ATP from ADP in the presence of a proton gradient across the membrane. The V-type alpha chain is a catalytic subunit. This is V-type ATP synthase alpha chain (atpA) from Chlamydia muridarum (strain MoPn / Nigg).